The chain runs to 82 residues: Mitotic-spindle organizing protein 1 (82 aa).

Alanine 2 carries the post-translational modification N-acetylalanine.

This sequence belongs to the MOZART1 family. Associates with the gamma-tubulin ring complex (gTuRC) consisting of TUBGCP2, TUBGCP3, TUBGCP4, TUBGCP5 and TUBGCP6 and gamma-tubulin TUBG1 or TUBG2; within the complex, interacts with TUBGCP3 and TUBGCP6 to form a luminal bridge with actin that stabilizes the initial structure during complex assembly. Interacts with TUBG1.

It localises to the cytoplasm. It is found in the cytoskeleton. The protein localises to the microtubule organizing center. The protein resides in the centrosome. Its subcellular location is the spindle. Its function is as follows. Required for the recruitment and the assembly of the gamma-tubulin ring complex (gTuRC) at the centrosome. The gTuRC regulates the minus-end nucleation of alpha-beta tubulin heterodimers that grow into microtubule protafilaments, a critical step in centrosome duplication and spindle formation. In Homo sapiens (Human), this protein is Mitotic-spindle organizing protein 1 (MZT1).